The sequence spans 219 residues: Uracil-DNA glycosylase (219 aa).

The active-site Proton acceptor is the aspartate 61.

It belongs to the uracil-DNA glycosylase (UDG) superfamily. UNG family.

The protein localises to the cytoplasm. It carries out the reaction Hydrolyzes single-stranded DNA or mismatched double-stranded DNA and polynucleotides, releasing free uracil.. In terms of biological role, excises uracil residues from the DNA which can arise as a result of misincorporation of dUMP residues by DNA polymerase or due to deamination of cytosine. The polypeptide is Uracil-DNA glycosylase (Neisseria meningitidis serogroup B (strain ATCC BAA-335 / MC58)).